Reading from the N-terminus, the 281-residue chain is GDT1-like protein 4 (281 aa).

The N-terminal stretch at 1–22 (MARRVSTTRLLLLLLLVAAAAA) is a signal peptide. The next 6 membrane-spanning stretches (helical) occupy residues 66 to 86 (AGLG…VSEI), 105 to 125 (TVLS…TGLG), 137 to 157 (TNSA…YIAW), 188 to 208 (IFSR…FLAE), 226 to 246 (AVGV…FAVV), and 258 to 278 (GTVA…SYFY).

This sequence belongs to the GDT1 family.

It localises to the membrane. The polypeptide is GDT1-like protein 4 (Oryza sativa subsp. indica (Rice)).